Consider the following 560-residue polypeptide: Arginine--tRNA ligase (560 aa).

Residues 135–145 carry the 'HIGH' region motif; the sequence is ANPTGLLHMGN.

This sequence belongs to the class-I aminoacyl-tRNA synthetase family. As to quaternary structure, monomer.

Its subcellular location is the cytoplasm. It carries out the reaction tRNA(Arg) + L-arginine + ATP = L-arginyl-tRNA(Arg) + AMP + diphosphate. This chain is Arginine--tRNA ligase, found in Moorella thermoacetica (strain ATCC 39073 / JCM 9320).